A 183-amino-acid chain; its full sequence is U3 small nucleolar ribonucleoprotein protein imp3 (183 aa).

The 67-residue stretch at 108 to 174 (RRLPVVMRNI…IKKHVMDYNN (67 aa)) folds into the S4 RNA-binding domain.

It belongs to the universal ribosomal protein uS4 family. Component of a heterotrimeric complex containing imp3, imp4 and mpp10.

Its subcellular location is the nucleus. The protein localises to the nucleolus. Component of the U3 small nucleolar ribonucleoprotein. Required for the early cleavages at sites A0, A1 and A2 during 18S ribosomal pre-RNA processing. In Caenorhabditis elegans, this protein is U3 small nucleolar ribonucleoprotein protein imp3.